Here is a 186-residue protein sequence, read N- to C-terminus: Protein GrpE (186 aa).

Polar residues predominate over residues 1–15; that stretch reads MADEQQTLDQQTPEQ. Positions 1–20 are disordered; sequence MADEQQTLDQQTPEQPTGAA.

It belongs to the GrpE family. As to quaternary structure, homodimer.

It localises to the cytoplasm. Participates actively in the response to hyperosmotic and heat shock by preventing the aggregation of stress-denatured proteins, in association with DnaK and GrpE. It is the nucleotide exchange factor for DnaK and may function as a thermosensor. Unfolded proteins bind initially to DnaJ; upon interaction with the DnaJ-bound protein, DnaK hydrolyzes its bound ATP, resulting in the formation of a stable complex. GrpE releases ADP from DnaK; ATP binding to DnaK triggers the release of the substrate protein, thus completing the reaction cycle. Several rounds of ATP-dependent interactions between DnaJ, DnaK and GrpE are required for fully efficient folding. The polypeptide is Protein GrpE (Pseudomonas aeruginosa (strain LESB58)).